The sequence spans 366 residues: Acetylserotonin O-methyltransferase 2 (366 aa).

S-adenosyl-L-homocysteine contacts are provided by glycine 209, aspartate 232, aspartate 253, and lysine 267. Histidine 271 (proton acceptor) is an active-site residue. Catalysis depends on residues glutamate 302 and glutamate 332.

Belongs to the class I-like SAM-binding methyltransferase superfamily. Cation-independent O-methyltransferase family. As to quaternary structure, homodimer. As to expression, expressed in roots, leaves, stems and flowers.

It localises to the cytoplasm. It catalyses the reaction N-acetylserotonin + S-adenosyl-L-methionine = melatonin + S-adenosyl-L-homocysteine + H(+). It participates in aromatic compound metabolism; melatonin biosynthesis; melatonin from serotonin: step 1/2. Its function is as follows. Methyltransferase which catalyzes the transfer of a methyl group onto N-acetylserotonin, producing melatonin (N-acetyl-5-methoxytryptamine). The protein is Acetylserotonin O-methyltransferase 2 of Oryza sativa subsp. japonica (Rice).